We begin with the raw amino-acid sequence, 220 residues long: UPF0502 protein CV_4303 (220 aa).

This sequence belongs to the UPF0502 family.

The protein is UPF0502 protein CV_4303 of Chromobacterium violaceum (strain ATCC 12472 / DSM 30191 / JCM 1249 / CCUG 213 / NBRC 12614 / NCIMB 9131 / NCTC 9757 / MK).